A 242-amino-acid polypeptide reads, in one-letter code: 2-C-methyl-D-erythritol 4-phosphate cytidylyltransferase (242 aa).

The protein belongs to the IspD/TarI cytidylyltransferase family. IspD subfamily.

The enzyme catalyses 2-C-methyl-D-erythritol 4-phosphate + CTP + H(+) = 4-CDP-2-C-methyl-D-erythritol + diphosphate. Its pathway is isoprenoid biosynthesis; isopentenyl diphosphate biosynthesis via DXP pathway; isopentenyl diphosphate from 1-deoxy-D-xylulose 5-phosphate: step 2/6. Its function is as follows. Catalyzes the formation of 4-diphosphocytidyl-2-C-methyl-D-erythritol from CTP and 2-C-methyl-D-erythritol 4-phosphate (MEP). This chain is 2-C-methyl-D-erythritol 4-phosphate cytidylyltransferase, found in Shewanella loihica (strain ATCC BAA-1088 / PV-4).